We begin with the raw amino-acid sequence, 181 residues long: Achaete-scute homolog 3 (181 aa).

The tract at residues 93–106 (AFTRKRNERERQRV) is basic motif. Residues 93 to 145 (AFTRKRNERERQRVKCVNEGYAQLRHHLPEEYLEKRLSKVETLRAAIKYINYL) form the bHLH domain. Residues 107-145 (KCVNEGYAQLRHHLPEEYLEKRLSKVETLRAAIKYINYL) are helix-loop-helix motif.

As to quaternary structure, efficient DNA binding requires dimerization with another bHLH protein. In terms of tissue distribution, widely expressed in fetal and adult tissues.

It is found in the nucleus. Transcriptional repressor. Inhibits myogenesis. Plays a role in progenitor cells which differentiate into ductal and acinar, but not myoepithelial, cell lineages in the salivary glands. Involved in the functions of the microvillar cells and Bowman's glands and probably, in a non-cell-autonomous manner, in the development or regeneration of a complete olfactory epithelium (OE). In Homo sapiens (Human), this protein is Achaete-scute homolog 3.